The following is a 734-amino-acid chain: Platelet glycoprotein Ib alpha chain (734 aa).

The N-terminal stretch at 1 to 16 (MALLILLFLLPSPLHS) is a signal peptide. Residues 17–47 (QHTCSISKVTSLLEVNCENKKLTALPADLPA) enclose the LRRNT domain. Residues 17 to 612 (QHTCSISKVT…LNSDFCCFLP (596 aa)) lie on the Extracellular side of the membrane. A disulfide bridge links cysteine 20 with cysteine 33. LRR repeat units lie at residues 48–69 (DTGI…SLVH), 72–93 (HLTY…GKLI), 94–115 (KLEN…GWAL), 117–140 (ALTT…DGLS), 141–162 (QLQE…LLLP), 165–188 (KLKK…DGLE), and 189–210 (DLDT…FFGT). One can recognise an LRRCT domain in the interval 221 to 282 (NSWYCDCEIL…YSYPGKGCPT (62 aa)). Disulfide bonds link cysteine 225-cysteine 264 and cysteine 227-cysteine 280. At tyrosine 292 the chain carries Sulfotyrosine. O-linked (GalNAc...) threonine glycans are attached at residues threonine 301, threonine 311, threonine 315, and threonine 316. A glycan (O-linked (GalNAc...) serine) is linked at serine 335. Threonine 339, threonine 348, threonine 358, and threonine 377 each carry an O-linked (GalNAc...) threonine glycan. Serine 382 carries O-linked (GalNAc...) serine glycosylation. Threonine 384, threonine 385, and threonine 405 each carry an O-linked (GalNAc...) threonine glycan. 2 disordered regions span residues 406 to 429 (STLT…TPEH) and 460 to 526 (EPST…PEPS). O-linked (GalNAc...) threonine glycans are attached at residues threonine 512, threonine 516, threonine 519, threonine 530, threonine 542, threonine 546, threonine 550, and threonine 562. O-linked (GalNAc...) serine glycosylation occurs at serine 572. A glycan (O-linked (GalNAc...) threonine) is linked at threonine 573. Residues 613–633 (LGFYVLGLLWLLFASVVLILL) traverse the membrane as a helical segment. Residues 634 to 734 (LTWTWHVTPH…VGIRYSGHSL (101 aa)) lie on the Cytoplasmic side of the membrane. Serine 711 and serine 714 each carry phosphoserine.

In terms of assembly, two GP-Ib beta are disulfide-linked to one GP-Ib alpha. GP-IX is complexed with the GP-Ib heterodimer via a non covalent linkage. Interacts with FLNB. Interacts with FLNA (via filamin repeats 4, 9, 12, 17, 19, 21, and 23). In terms of processing, O-glycosylated. Glycocalicin is the product of a proteolytic cleavage/shedding, catalyzed by ADAM17, which releases most of the extracellular domain. Binding sites for vWF and thrombin are in this part of the protein.

The protein localises to the membrane. In terms of biological role, GP-Ib, a surface membrane protein of platelets, participates in the formation of platelet plugs by binding to the A1 domain of vWF, which is already bound to the subendothelium. This is Platelet glycoprotein Ib alpha chain (Gp1ba) from Mus musculus (Mouse).